The chain runs to 373 residues: Probable peptidoglycan glycosyltransferase FtsW (373 aa).

9 consecutive transmembrane segments (helical) span residues 15-35 (LVIL…VYSA), 48-68 (FYFL…MAVA), 80-100 (AVPI…PGIG), 144-164 (FFST…LILL), 168-188 (DLGA…AAGT), 192-212 (YIIA…MNVD), 278-298 (LGLI…LRGV), 311-331 (FLAF…MAVV), and 342-362 (LPFI…VGIL).

This sequence belongs to the SEDS family. FtsW subfamily.

Its subcellular location is the cell inner membrane. It catalyses the reaction [GlcNAc-(1-&gt;4)-Mur2Ac(oyl-L-Ala-gamma-D-Glu-L-Lys-D-Ala-D-Ala)](n)-di-trans,octa-cis-undecaprenyl diphosphate + beta-D-GlcNAc-(1-&gt;4)-Mur2Ac(oyl-L-Ala-gamma-D-Glu-L-Lys-D-Ala-D-Ala)-di-trans,octa-cis-undecaprenyl diphosphate = [GlcNAc-(1-&gt;4)-Mur2Ac(oyl-L-Ala-gamma-D-Glu-L-Lys-D-Ala-D-Ala)](n+1)-di-trans,octa-cis-undecaprenyl diphosphate + di-trans,octa-cis-undecaprenyl diphosphate + H(+). It functions in the pathway cell wall biogenesis; peptidoglycan biosynthesis. Functionally, peptidoglycan polymerase that is essential for cell division. The chain is Probable peptidoglycan glycosyltransferase FtsW from Geobacter sulfurreducens (strain DL-1 / KN400).